A 223-amino-acid polypeptide reads, in one-letter code: MLGGSAHGGPVFGGVQAPGARYILPSFEERTAYGYKRQDPYAKLFEDRIIFLGVQVDDASADDIMAQLLVLESQDPDRDIVMYINSPGGSFTAMTAIYDTMQYVRPQIQTVVLGQAASAAAVLTAAGAPGKRLALPNARILIHQPAVGEAGHGQASDILIQSNEINRMRAWLEETLVKHSSRTLEQVNKDIERDNILSATEALKYGLIDQVLTSRKTLPALVK.

Ser-118 serves as the catalytic Nucleophile. His-143 is a catalytic residue.

The protein belongs to the peptidase S14 family. In terms of assembly, fourteen ClpP subunits assemble into 2 heptameric rings which stack back to back to give a disk-like structure with a central cavity, resembling the structure of eukaryotic proteasomes.

It is found in the cytoplasm. It catalyses the reaction Hydrolysis of proteins to small peptides in the presence of ATP and magnesium. alpha-casein is the usual test substrate. In the absence of ATP, only oligopeptides shorter than five residues are hydrolyzed (such as succinyl-Leu-Tyr-|-NHMec, and Leu-Tyr-Leu-|-Tyr-Trp, in which cleavage of the -Tyr-|-Leu- and -Tyr-|-Trp bonds also occurs).. Its function is as follows. Cleaves peptides in various proteins in a process that requires ATP hydrolysis. Has a chymotrypsin-like activity. Plays a major role in the degradation of misfolded proteins. In Leifsonia xyli subsp. xyli (strain CTCB07), this protein is ATP-dependent Clp protease proteolytic subunit 2.